A 329-amino-acid chain; its full sequence is MLEDYYQLDNSYYQRGVEDNLYAAKWGMVIEFLNLNDPNLKPVEGVNFALIGFKSDKGVYINHGRVGAVEGPQSIRTQLAKLPWHLGRNVHVFDVGDIDGPNRSLEQLQSSLAKAVKRLRELNLRPIVLGGGHETAYGNYLGLKSSLKPEQELAVINMDAHFDLRPYDQTGPNSGTGFRQMFDETLAQKQVFNYLILGIQEHNNNLFLFDFVAKSKAIQFLTGLDIYQMGHKEVCKVVDAFLADKEQVYLTIDIDCFAAGAAPGVSAIQSLGVDPNLAVLVFQHIAASGKLIGFDVVEVSPPHDIDNHTANLAASFIFYLTQVWAQIHD.

6 residues coordinate Mn(2+): His-133, Asp-159, His-161, Asp-163, Asp-253, and Asp-255.

It belongs to the arginase family. Mn(2+) is required as a cofactor.

The catalysed reaction is N-formimidoyl-L-glutamate + H2O = formamide + L-glutamate. It participates in amino-acid degradation; L-histidine degradation into L-glutamate; L-glutamate from N-formimidoyl-L-glutamate (hydrolase route): step 1/1. In terms of biological role, catalyzes the conversion of N-formimidoyl-L-glutamate to L-glutamate and formamide. This chain is Formimidoylglutamase, found in Streptococcus gordonii (strain Challis / ATCC 35105 / BCRC 15272 / CH1 / DL1 / V288).